Consider the following 603-residue polypeptide: Mono(2-hydroxyethyl) terephthalate hydrolase (603 aa).

Residues 1 to 17 (MQTTVTTMLLASVALAA) form the signal peptide. The N-palmitoyl cysteine moiety is linked to residue Cys18. The S-diacylglycerol cysteine moiety is linked to residue Cys18. A disordered region spans residues 24-44 (TPLPLPQQQPPQQEPPPPPVP). Pro residues predominate over residues 26-44 (LPLPQQQPPQQEPPPPPVP). Cys51 and Cys92 form a disulfide bridge. Gly132 is a binding site for 4-[(2-hydroxyethoxy)carbonyl]benzoate. Intrachain disulfides connect Cys224-Cys529, Cys303-Cys320, Cys340-Cys348, and Cys577-Cys599. Residue Ser225 is the Acyl-ester intermediate of the active site. Position 226 (Glu226) interacts with 4-[(2-hydroxyethoxy)carbonyl]benzoate. Ca(2+)-binding residues include Asp304, Asp307, Leu309, Asp311, and Ile313. 2 residues coordinate 4-[(2-hydroxyethoxy)carbonyl]benzoate: Arg411 and Ser416. Catalysis depends on charge relay system residues Asp492 and His528. His528 contributes to the 4-[(2-hydroxyethoxy)carbonyl]benzoate binding site.

This sequence belongs to the tannase family.

The protein localises to the cell outer membrane. It catalyses the reaction 4-[(2-hydroxyethoxy)carbonyl]benzoate + H2O = terephthalate + ethylene glycol + H(+). Its function is as follows. Involved in the degradation and assimilation of the plastic poly(ethylene terephthalate) (PET), which allows I.sakaiensis to use PET as its major energy and carbon source for growth. Likely acts synergistically with PETase to depolymerize PET. Catalyzes the hydrolysis of mono(2-hydroxyethyl) terephthalate (MHET) into its two environmentally benign monomers, terephthalate and ethylene glycol. Does not show activity against PET, bis(hydroxyethyl) terephthalate (BHET), pNP-aliphatic esters or typical aromatic ester compounds catalyzed by the tannase family enzymes, such as ethyl gallate and ethyl ferulate. In Piscinibacter sakaiensis (Ideonella sakaiensis), this protein is Mono(2-hydroxyethyl) terephthalate hydrolase.